The sequence spans 378 residues: Flagellar P-ring protein 2 (378 aa).

Residues 1–33 form the signal peptide; that stretch reads MHEVSDKTNAIHPLQRVSRALFALGLLCFAAMA.

This sequence belongs to the FlgI family. As to quaternary structure, the basal body constitutes a major portion of the flagellar organelle and consists of four rings (L,P,S, and M) mounted on a central rod.

It is found in the periplasm. It localises to the bacterial flagellum basal body. In terms of biological role, assembles around the rod to form the L-ring and probably protects the motor/basal body from shearing forces during rotation. This Hahella chejuensis (strain KCTC 2396) protein is Flagellar P-ring protein 2.